A 369-amino-acid polypeptide reads, in one-letter code: Ribosomal RNA large subunit methyltransferase M (369 aa).

S-adenosyl-L-methionine is bound by residues S198, 231–234 (APGG), D250, D270, and D287. K316 (proton acceptor) is an active-site residue.

It belongs to the class I-like SAM-binding methyltransferase superfamily. RNA methyltransferase RlmE family. RlmM subfamily. In terms of assembly, monomer.

It is found in the cytoplasm. It catalyses the reaction cytidine(2498) in 23S rRNA + S-adenosyl-L-methionine = 2'-O-methylcytidine(2498) in 23S rRNA + S-adenosyl-L-homocysteine + H(+). In terms of biological role, catalyzes the 2'-O-methylation at nucleotide C2498 in 23S rRNA. This chain is Ribosomal RNA large subunit methyltransferase M, found in Idiomarina loihiensis (strain ATCC BAA-735 / DSM 15497 / L2-TR).